We begin with the raw amino-acid sequence, 394 residues long: Acid ceramidase (394 aa).

The first 18 residues, 1–18 (MRGQSLLTWVLAAAVTCA), serve as a signal peptide directing secretion. Cysteines 30 and 339 form a disulfide. Cys142 (nucleophile) is an active-site residue. Asn172, Asn194, Asn258, Asn341, and Asn347 each carry an N-linked (GlcNAc...) asparagine glycan. A disulfide bridge links Cys387 with Cys391.

Belongs to the acid ceramidase family. In terms of assembly, heterodimer; disulfide-linked. The heterodimer is composed of the disulfide-linked alpha and beta chains produced by autocatalytic cleavage of the precursor. N-glycosylated. In terms of processing, proteolytically cleaved into two chains alpha and beta that remain associated via a disulfide bond. Cleavage gives rise to a conformation change that activates the enzyme. The same catalytic Cys residue mediates the autoproteolytic cleavage and subsequent hydrolysis of lipid substrates. The beta chain may undergo an additional C-terminal processing. As to expression, widely expressed.

It localises to the lysosome. The protein resides in the secreted. The enzyme catalyses an N-acylsphing-4-enine + H2O = sphing-4-enine + a fatty acid. It catalyses the reaction N-dodecanoylsphing-4-enine + H2O = dodecanoate + sphing-4-enine. The catalysed reaction is N-(9Z-octadecenoyl)-sphing-4-enine + H2O = sphing-4-enine + (9Z)-octadecenoate. It carries out the reaction N-tetradecanoylsphing-4-enine + H2O = tetradecanoate + sphing-4-enine. The enzyme catalyses N-hexadecanoylsphing-4-enine + H2O = sphing-4-enine + hexadecanoate. It catalyses the reaction N-octadecanoylsphing-4-enine + H2O = sphing-4-enine + octadecanoate. The catalysed reaction is N-dodecanoyl-(4R)-hydroxysphinganine + H2O = (4R)-hydroxysphinganine + dodecanoate. It carries out the reaction N-(dodecanoyl)-sphinganine + H2O = dodecanoate + sphinganine. The enzyme catalyses N-(acetyl)-sphing-4-enine + H2O = sphing-4-enine + acetate. It catalyses the reaction N-(hexanoyl)sphing-4-enine + H2O = hexanoate + sphing-4-enine. The catalysed reaction is N-octanoylsphing-4-enine + H2O = octanoate + sphing-4-enine. It carries out the reaction N-dodecanoylethanolamine + H2O = dodecanoate + ethanolamine. It functions in the pathway lipid metabolism; sphingolipid metabolism. In terms of biological role, lysosomal ceramidase that hydrolyzes sphingolipid ceramides into sphingosine and free fatty acids at acidic pH. Ceramides, sphingosine, and its phosphorylated form sphingosine-1-phosphate are bioactive lipids that mediate cellular signaling pathways regulating several biological processes including cell proliferation, apoptosis and differentiation. Has a higher catalytic efficiency towards C12-ceramides versus other ceramides. Also catalyzes the reverse reaction allowing the synthesis of ceramides from fatty acids and sphingosine. For the reverse synthetic reaction, the natural sphingosine D-erythro isomer is more efficiently utilized as a substrate compared to D-erythro-dihydrosphingosine and D-erythro-phytosphingosine, while the fatty acids with chain lengths of 12 or 14 carbons are the most efficiently used. Also has an N-acylethanolamine hydrolase activity. By regulating the levels of ceramides, sphingosine and sphingosine-1-phosphate in the epidermis, mediates the calcium-induced differentiation of epidermal keratinocytes. Also indirectly regulates tumor necrosis factor/TNF-induced apoptosis. By regulating the intracellular balance between ceramides and sphingosine, in adrenocortical cells, probably also acts as a regulator of steroidogenesis. This Mus musculus (Mouse) protein is Acid ceramidase.